Consider the following 616-residue polypeptide: Fatty acyl-CoA reductase 2, chloroplastic (616 aa).

The transit peptide at methionine 1–valine 14 directs the protein to the chloroplast. The NAD(P)H-binding motif lies at phenylalanine 133–alanine 143. Residues tyrosine 357 and lysine 361 contribute to the active site.

It belongs to the fatty acyl-CoA reductase family. In terms of tissue distribution, expressed in the tapetum of anthers.

Its subcellular location is the plastid. The protein localises to the chloroplast. The catalysed reaction is a long-chain fatty acyl-CoA + 2 NADPH + 2 H(+) = a long-chain primary fatty alcohol + 2 NADP(+) + CoA. It catalyses the reaction hexadecanoyl-CoA + 2 NADPH + 2 H(+) = hexadecan-1-ol + 2 NADP(+) + CoA. The enzyme catalyses hexadecanoyl-[ACP] + 2 NADPH + 2 H(+) = hexadecan-1-ol + holo-[ACP] + 2 NADP(+). In terms of biological role, catalyzes the reduction of fatty acyl-CoA and -ACP (acyl carrier protein) substrates to fatty alcohols. Triggers the accumulation of C16 and C18 fatty alcohols; converts palmitoyl-acyl carrier protein to the corresponding C16:0 alcohol with NAD(P)H as electron donor, but seems inactive toward palmitoyl- or other acyl-coenzyme A. Also triggers the formation of some C16:0 aldehydes. Involved in the synthesis of the lipid component in sporopollenin. Required for exine patterning of pollen grain by mediating the formation of pollen wall substances. The chain is Fatty acyl-CoA reductase 2, chloroplastic from Arabidopsis thaliana (Mouse-ear cress).